Here is a 31-residue protein sequence, read N- to C-terminus: Jingzhaotoxin F7-15.33 (31 aa).

3 disulfide bridges follow: Cys-2/Cys-16, Cys-9/Cys-21, and Cys-15/Cys-28.

It belongs to the neurotoxin 10 (Hwtx-1) family. As to expression, expressed by the venom gland.

The protein resides in the secreted. In terms of biological role, probable ion channel inhibitor. This is Jingzhaotoxin F7-15.33 from Chilobrachys guangxiensis (Chinese earth tiger tarantula).